We begin with the raw amino-acid sequence, 134 residues long: MIFSMLRKLPKVTCRDVLPEIRAICIEEIGCWMQSYSTSFLTDSYLKYIGWTLHDKHREVRVKCVKALKGLYGNRDLTARLELFTGCFKDWMVSMIMDREYSVAVEAVRLLILILKNMEGVLMDVDCESVYPIV.

The 86-residue stretch at 10–95 folds into the SCD domain; sequence PKVTCRDVLP…GCFKDWMVSM (86 aa).

It belongs to the SCC3 family.

Its subcellular location is the nucleus. The protein is STAG3-like protein 3 (STAG3L3) of Homo sapiens (Human).